A 257-amino-acid chain; its full sequence is Imidazole glycerol phosphate synthase subunit HisF (257 aa).

Catalysis depends on residues Asp-12 and Asp-131.

The protein belongs to the HisA/HisF family. As to quaternary structure, heterodimer of HisH and HisF.

Its subcellular location is the cytoplasm. The enzyme catalyses 5-[(5-phospho-1-deoxy-D-ribulos-1-ylimino)methylamino]-1-(5-phospho-beta-D-ribosyl)imidazole-4-carboxamide + L-glutamine = D-erythro-1-(imidazol-4-yl)glycerol 3-phosphate + 5-amino-1-(5-phospho-beta-D-ribosyl)imidazole-4-carboxamide + L-glutamate + H(+). It functions in the pathway amino-acid biosynthesis; L-histidine biosynthesis; L-histidine from 5-phospho-alpha-D-ribose 1-diphosphate: step 5/9. Functionally, IGPS catalyzes the conversion of PRFAR and glutamine to IGP, AICAR and glutamate. The HisF subunit catalyzes the cyclization activity that produces IGP and AICAR from PRFAR using the ammonia provided by the HisH subunit. The polypeptide is Imidazole glycerol phosphate synthase subunit HisF (Paraburkholderia phymatum (strain DSM 17167 / CIP 108236 / LMG 21445 / STM815) (Burkholderia phymatum)).